The chain runs to 197 residues: Glycerol-3-phosphate acyltransferase (197 aa).

5 helical membrane passes run 7–27 (PSIA…LLLT), 56–76 (LAAL…WIAW), 82–102 (DIGW…WLGF), 116–136 (FGLG…MLAI), and 157–177 (YFGR…IIWL).

It belongs to the PlsY family. In terms of assembly, probably interacts with PlsX.

Its subcellular location is the cell inner membrane. It carries out the reaction an acyl phosphate + sn-glycerol 3-phosphate = a 1-acyl-sn-glycero-3-phosphate + phosphate. It participates in lipid metabolism; phospholipid metabolism. Functionally, catalyzes the transfer of an acyl group from acyl-phosphate (acyl-PO(4)) to glycerol-3-phosphate (G3P) to form lysophosphatidic acid (LPA). This enzyme utilizes acyl-phosphate as fatty acyl donor, but not acyl-CoA or acyl-ACP. The polypeptide is Glycerol-3-phosphate acyltransferase (Erythrobacter litoralis (strain HTCC2594)).